A 208-amino-acid polypeptide reads, in one-letter code: MKLVEVKHPLVKHKLGVMREAEIDTKKFRELATEIGSLLTYEATSDLETEKVTINGWNGPVEIDRIKGKKVTVVPILRAGLGMMDGVLEHVPSARISVVGIYRNEETLEPVPYFQKLASDLEERLSIVVDPMLATGGSMIATLDLLKAKGCKHIKVLVLVAAPEGIKALEAAHPDIELYCASIDSHLNEQGYIIPGLGDAGDKIFGTK.

Residues Arg78, Arg103, and 130 to 138 (DPMLATGGS) contribute to the 5-phospho-alpha-D-ribose 1-diphosphate site. Uracil contacts are provided by residues Ile193 and 198 to 200 (GDA). Asp199 serves as a coordination point for 5-phospho-alpha-D-ribose 1-diphosphate.

It belongs to the UPRTase family. The cofactor is Mg(2+).

The enzyme catalyses UMP + diphosphate = 5-phospho-alpha-D-ribose 1-diphosphate + uracil. Its pathway is pyrimidine metabolism; UMP biosynthesis via salvage pathway; UMP from uracil: step 1/1. With respect to regulation, allosterically activated by GTP. Its function is as follows. Catalyzes the conversion of uracil and 5-phospho-alpha-D-ribose 1-diphosphate (PRPP) to UMP and diphosphate. The sequence is that of Uracil phosphoribosyltransferase from Haemophilus influenzae (strain PittEE).